The following is a 270-amino-acid chain: Undecaprenyl-diphosphatase 3 (270 aa).

Transmembrane regions (helical) follow at residues 5-25 (YYIL…PIPI), 42-62 (IEGF…VLLI), 89-109 (FFFI…GVLF), 117-137 (LKGV…LWII), 192-212 (FSFL…ITDI), 220-240 (TLFV…YISL), and 250-270 (GNLK…LIFL).

This sequence belongs to the UppP family.

It localises to the cell membrane. It catalyses the reaction di-trans,octa-cis-undecaprenyl diphosphate + H2O = di-trans,octa-cis-undecaprenyl phosphate + phosphate + H(+). In terms of biological role, catalyzes the dephosphorylation of undecaprenyl diphosphate (UPP). Confers resistance to bacitracin. This chain is Undecaprenyl-diphosphatase 3, found in Bacillus anthracis.